We begin with the raw amino-acid sequence, 45 residues long: MEAALLLAKLPEAYQIFDPLVDVLPVIPVFFLLLAFVWQAAVGFR.

Positions 1–8 (MEAALLLA) are excised as a propeptide. A helical membrane pass occupies residues 24–44 (LPVIPVFFLLLAFVWQAAVGF).

Belongs to the PsbK family. PSII is composed of 1 copy each of membrane proteins PsbA, PsbB, PsbC, PsbD, PsbE, PsbF, PsbH, PsbI, PsbJ, PsbK, PsbL, PsbM, PsbT, PsbX, PsbY, PsbZ, Psb30/Ycf12, peripheral proteins PsbO, CyanoQ (PsbQ), PsbU, PsbV and a large number of cofactors. It forms dimeric complexes.

Its subcellular location is the cellular thylakoid membrane. In terms of biological role, one of the components of the core complex of photosystem II (PSII). PSII is a light-driven water:plastoquinone oxidoreductase that uses light energy to abstract electrons from H(2)O, generating O(2) and a proton gradient subsequently used for ATP formation. It consists of a core antenna complex that captures photons, and an electron transfer chain that converts photonic excitation into a charge separation. In Synechococcus elongatus (strain ATCC 33912 / PCC 7942 / FACHB-805) (Anacystis nidulans R2), this protein is Photosystem II reaction center protein K.